We begin with the raw amino-acid sequence, 873 residues long: Putative receptor-like protein kinase At5g39000 (873 aa).

The N-terminal stretch at 1–21 (MIRHALLIFSILVSTPIVGEG) is a signal peptide. The Extracellular segment spans residues 22-445 (ATSTYEPTDV…KNKSHILPIT (424 aa)). 9 N-linked (GlcNAc...) asparagine glycosylation sites follow: Asn49, Asn64, Asn138, Asn168, Asn216, Asn266, Asn300, Asn340, and Asn437. Residues 446–466 (LAVVGSLVVLAMFVVGVLVIM) form a helical membrane-spanning segment. The Cytoplasmic portion of the chain corresponds to 467 to 873 (KKKKKSKPST…FSEINEPKAR (407 aa)). Positions 472–494 (SKPSTNSSWCPLPHGTDSTNTKP) are disordered. The Protein kinase domain occupies 518–803 (FEDKLIIGVG…EFALQLHETA (286 aa)). ATP contacts are provided by residues 524 to 532 (IGVGGFGSV) and Lys547. The active-site Proton acceptor is Asp646. A disordered region spans residues 813–843 (LDLMPSGEVGTTTDGEDDLFSRTTGHVGKST). Residues 833–843 (SRTTGHVGKST) show a composition bias toward polar residues.

This sequence belongs to the protein kinase superfamily. Ser/Thr protein kinase family.

It is found in the membrane. In Arabidopsis thaliana (Mouse-ear cress), this protein is Putative receptor-like protein kinase At5g39000.